The following is a 350-amino-acid chain: CMP-N-acetylneuraminate-beta-galactosamide-alpha-2,3-sialyltransferase 2 (350 aa).

Topologically, residues 1–6 are cytoplasmic; it reads MKCSLR. A helical; Signal-anchor for type II membrane protein transmembrane segment spans residues 7–27; sequence VWFLSMAFLLVFIMSLLFTYS. Residues 28 to 350 lie on the Lumenal side of the membrane; sequence HHSMATLPYL…ASKIEVYRGN (323 aa). 3 disulfides stabilise this stretch: cysteine 70-cysteine 75, cysteine 72-cysteine 149, and cysteine 152-cysteine 291. The substrate site is built by glutamine 116, asparagine 157, and asparagine 180. Asparagine 211 carries an N-linked (GlcNAc...) asparagine glycan. Tyrosine 240, tyrosine 276, glycine 280, glycine 300, histidine 309, and histidine 326 together coordinate substrate.

The protein belongs to the glycosyltransferase 29 family. Homodimer; disulfide-linked. Homodimer formation occurs in the endoplasmic reticulum. Post-translationally, the soluble form derives from the membrane form by proteolytic processing. N-glycosylated; necessary for proper exit from endoplasmic reticulum and trafficking to the Golgi apparatus.

The protein resides in the golgi apparatus. It is found in the golgi stack membrane. It localises to the secreted. It carries out the reaction a beta-D-galactosyl-(1-&gt;3)-N-acetyl-alpha-D-galactosaminyl derivative + CMP-N-acetyl-beta-neuraminate = an N-acetyl-alpha-neuraminyl-(2-&gt;3)-beta-D-galactosyl-(1-&gt;3)-N-acetyl-alpha-D-galactosaminyl derivative + CMP + H(+). The enzyme catalyses a ganglioside GM1 (d18:1(4E)) + CMP-N-acetyl-beta-neuraminate = a ganglioside GD1a (d18:1(4E)) + CMP + H(+). It catalyses the reaction ganglioside GM1 (d18:1(4E)/18:0) + CMP-N-acetyl-beta-neuraminate = ganglioside GD1a (18:1(4E)/18:0) + CMP + H(+). The catalysed reaction is a ganglioside GA1 + CMP-N-acetyl-beta-neuraminate = a ganglioside GM1b + CMP + H(+). It carries out the reaction a ganglioside GA1 (d18:1(4E)) + CMP-N-acetyl-beta-neuraminate = a ganglioside GM1b (d18:1(4E)) + CMP + H(+). The enzyme catalyses a globoside GalGb4Cer + CMP-N-acetyl-beta-neuraminate = a globoside MSGG + CMP + H(+). The protein operates within protein modification; protein glycosylation. It participates in glycolipid biosynthesis. Its function is as follows. A beta-galactoside alpha2-3 sialyltransferase primarily involved in terminal sialylation of ganglio and globo series glycolipids. Catalyzes the transfer of sialic acid (N-acetyl-neuraminic acid; Neu5Ac) from the nucleotide sugar donor CMP-Neu5Ac onto acceptor Galbeta-(1-&gt;3)-GalNAc-terminated glycoconjugates through an alpha2-3 linkage. Sialylates GM1/GM1a, GA1/asialo-GM1 gangliosides to form GD1a and GM1b, respectively. Together with ST3GAL3, primarily responsible for biosynthesis of brain gangliosides that function as ligand for myelin-associated glycoprotein MAG on axons, regulating MAG expression and axonal myelin stability and regeneration. Responsible for the sialylation of the pluripotent stem cell- and cancer stem cell-associated antigen SSEA3, forming SSEA4. Sialylates with low efficiency asialofetuin, presumably onto O-glycosidically linked Galbeta-(1-&gt;3)-GalNAc-O-Ser. This Rattus norvegicus (Rat) protein is CMP-N-acetylneuraminate-beta-galactosamide-alpha-2,3-sialyltransferase 2 (St3gal2).